Reading from the N-terminus, the 555-residue chain is Galectin-3-binding protein (555 aa).

The N-terminal stretch at 1–18 is a signal peptide; it reads MAPLRLFWIWLLVVGTRG. Residues 24–124 form the SRCR domain; sequence MRLADGGSAN…HDKDASVICT (101 aa). 3 disulfide bridges follow: Cys49–Cys113, Cys62–Cys123, and Cys93–Cys103. A glycan (N-linked (GlcNAc...) asparagine) is linked at Asn69. Residue Asn125 is glycosylated (N-linked (GlcNAc...) asparagine). The region spanning 153–221 is the BTB domain; sequence CDLFITVKVR…LYSRRIDVSL (69 aa). One can recognise a BACK domain in the interval 260–360; that stretch reads PLELYAYALA…MPPQDLFSLQ (101 aa). N-linked (GlcNAc...) asparagine glycans are attached at residues Asn362, Asn398, and Asn550.

In terms of assembly, homodimers and homomultimers. The multimers form ring-like structures with a diameter of 30-40 nm. Binds LGALS1 and LGALS3. Binds ITGB1, COL4A1, COL5A1, COL6A1, FN1 and NID. Interacts with the gamma-tubulin ring complex (gamma-TuRC), composed of gamma-tubulin, TUBGCP2, TUBGCP3, TUBGCP4, TUBGCP5 and TUBGCP6. The unglycosylated form interacts with PDE4DIP; this interaction, which is PDE4DIP isoform-specific, may connect a pericentrosomal complex, made of AKAP9, CDK5RAP2, EB1/MAPRE1 and PDE4DIP, to the gamma-tubulin ring complex (gamma-TuRC) to promote microtubule assembly and acetylation.

The protein localises to the secreted. Its subcellular location is the extracellular space. The protein resides in the extracellular matrix. Promotes integrin-mediated cell adhesion. May stimulate host defense against viruses and tumor cells. The protein is Galectin-3-binding protein (LGALS3BP) of Bos taurus (Bovine).